The following is a 485-amino-acid chain: Fumarate hydratase, mitochondrial (485 aa).

The N-terminal 19 residues, 1–19 (MLSASRKLNNQQFLKTIRN), are a transit peptide targeting the mitochondrion. Substrate is bound by residues 118–120 (SGT), 150–153 (HPND), 160–162 (SSN), and T208. H209 serves as the catalytic Proton donor/acceptor. The active site involves S339. Substrate is bound by residues S340 and 345–347 (KVN).

The protein belongs to the class-II fumarase/aspartase family. Fumarase subfamily. In terms of assembly, homotetramer.

The protein resides in the mitochondrion. It localises to the cytoplasm. It catalyses the reaction (S)-malate = fumarate + H2O. It functions in the pathway carbohydrate metabolism; tricarboxylic acid cycle; (S)-malate from fumarate: step 1/1. Functionally, catalyzes the reversible stereospecific interconversion of fumarate to L-malate. In terms of biological role, catalyzes the hydration of fumarate to L-malate in the tricarboxylic acid (TCA) cycle to facilitate a transition step in the production of energy in the form of NADH. In Dictyostelium discoideum (Social amoeba), this protein is Fumarate hydratase, mitochondrial.